Consider the following 320-residue polypeptide: Undecaprenyl-diphosphatase (320 aa).

8 helical membrane-spanning segments follow: residues F9–F29, G82–W102, L130–I150, L161–L181, L191–V211, F236–A256, L265–L285, and V296–I316.

This sequence belongs to the UppP family.

The protein localises to the cell inner membrane. It carries out the reaction di-trans,octa-cis-undecaprenyl diphosphate + H2O = di-trans,octa-cis-undecaprenyl phosphate + phosphate + H(+). In terms of biological role, catalyzes the dephosphorylation of undecaprenyl diphosphate (UPP). Confers resistance to bacitracin. In Nostoc sp. (strain PCC 7120 / SAG 25.82 / UTEX 2576), this protein is Undecaprenyl-diphosphatase.